A 367-amino-acid chain; its full sequence is tRNA/tmRNA (uracil-C(5))-methyltransferase (367 aa).

5 residues coordinate S-adenosyl-L-methionine: glutamine 190, tyrosine 218, asparagine 223, glutamate 239, and aspartate 299. Cysteine 324 (nucleophile) is an active-site residue. Residue glutamate 358 is the Proton acceptor of the active site.

Belongs to the class I-like SAM-binding methyltransferase superfamily. RNA M5U methyltransferase family. TrmA subfamily.

The catalysed reaction is uridine(54) in tRNA + S-adenosyl-L-methionine = 5-methyluridine(54) in tRNA + S-adenosyl-L-homocysteine + H(+). It catalyses the reaction uridine(341) in tmRNA + S-adenosyl-L-methionine = 5-methyluridine(341) in tmRNA + S-adenosyl-L-homocysteine + H(+). In terms of biological role, dual-specificity methyltransferase that catalyzes the formation of 5-methyluridine at position 54 (m5U54) in all tRNAs, and that of position 341 (m5U341) in tmRNA (transfer-mRNA). This Serratia proteamaculans (strain 568) protein is tRNA/tmRNA (uracil-C(5))-methyltransferase.